The following is a 196-amino-acid chain: Protein GrpE (196 aa).

The disordered stretch occupies residues 1 to 40 (MSSKEQKTPEGQAPEEIIMDQHEEVEAVEPNDSAEQVDPR).

It belongs to the GrpE family. In terms of assembly, homodimer.

The protein resides in the cytoplasm. In terms of biological role, participates actively in the response to hyperosmotic and heat shock by preventing the aggregation of stress-denatured proteins, in association with DnaK and GrpE. It is the nucleotide exchange factor for DnaK and may function as a thermosensor. Unfolded proteins bind initially to DnaJ; upon interaction with the DnaJ-bound protein, DnaK hydrolyzes its bound ATP, resulting in the formation of a stable complex. GrpE releases ADP from DnaK; ATP binding to DnaK triggers the release of the substrate protein, thus completing the reaction cycle. Several rounds of ATP-dependent interactions between DnaJ, DnaK and GrpE are required for fully efficient folding. The polypeptide is Protein GrpE (Salmonella enteritidis PT4 (strain P125109)).